The chain runs to 478 residues: Proline--tRNA ligase (478 aa).

This sequence belongs to the class-II aminoacyl-tRNA synthetase family. ProS type 3 subfamily. Homodimer.

It is found in the cytoplasm. It catalyses the reaction tRNA(Pro) + L-proline + ATP = L-prolyl-tRNA(Pro) + AMP + diphosphate. In terms of biological role, catalyzes the attachment of proline to tRNA(Pro) in a two-step reaction: proline is first activated by ATP to form Pro-AMP and then transferred to the acceptor end of tRNA(Pro). In Methanothrix thermoacetophila (strain DSM 6194 / JCM 14653 / NBRC 101360 / PT) (Methanosaeta thermophila), this protein is Proline--tRNA ligase.